Reading from the N-terminus, the 395-residue chain is Secreted aspartyl protease 1 (395 aa).

An N-terminal signal peptide occupies residues 1-20 (MQLSIQAIIGFVVAAGLAVA). Residues 21 to 88 (SELPSPMTVN…HLLLDLIDKR (68 aa)) constitute a propeptide, removed in mature form. Residue asparagine 41 is glycosylated (N-linked (GlcNAc...) asparagine). Positions 105–391 (WAGDVQFGQS…DMGKNRMGFA (287 aa)) constitute a Peptidase A1 domain. Catalysis depends on residues aspartate 121 and aspartate 283. The cysteines at positions 321 and 352 are disulfide-linked.

This sequence belongs to the peptidase A1 family.

The protein resides in the secreted. Inhibited by pepstatin A. Dominant secreted aspartyl protease that has a clear preference for aromatic residues in the P1' position directly adjacent to the cleavage site and, in particular, Trp. In addition, it generally cleaves peptides containing Lys, Arg, Phe, Tyr, or Nle (norleucine) in the P1 position, Nle and Glu at P2, and Arg and Val at P2'. Has important roles in facilitating the interaction of the yeast with the external environment. Is able to rapidly hydrolyze Staphylococcus aureus protein A, an important S.aureus virulence factor involved in immune evasion and biofilm formation. Shows anti-biofilm properties and thus plays a role in inter-kingdom interactions, beneficial for host skin health. The chain is Secreted aspartyl protease 1 from Malassezia globosa (strain ATCC MYA-4612 / CBS 7966) (Dandruff-associated fungus).